The following is a 597-amino-acid chain: Kelch-like protein 21 (597 aa).

Positions 35-103 (LDVTLEAAGG…SYTGRVAVSG (69 aa)) constitute a BTB domain. Positions 138 to 239 (CLDMQDFAEA…RRFYLLAHVE (102 aa)) constitute a BACK domain. 6 Kelch repeats span residues 287-335 (ILVL…ALGN), 336-382 (DIYV…VLDG), 384-422 (LYVV…ACRG), 423-470 (RLYA…TLNG), 472-512 (MYFV…VLGG), and 513-560 (KLYV…SIFR). The segment at 570–597 (GRGFELNSGSNDVDAGYHRLPQNPEELH) is disordered.

In terms of assembly, component of the BCR(KLHL21) E3 ubiquitin ligase complex, at least composed of CUL3, KLHL21 and RBX1.

The protein resides in the cytoplasm. It localises to the cytoskeleton. The protein localises to the spindle. Its pathway is protein modification; protein ubiquitination. Functionally, substrate-specific adapter of a BCR (BTB-CUL3-RBX1) E3 ubiquitin-protein ligase complex required for efficient chromosome alignment and cytokinesis. The BCR(KLHL21) E3 ubiquitin ligase complex regulates localization of the chromosomal passenger complex (CPC) from chromosomes to the spindle midzone in anaphase and mediates the ubiquitination of AURKB. Ubiquitination of AURKB by BCR(KLHL21) E3 ubiquitin ligase complex may not lead to its degradation by the proteasome. In Mus musculus (Mouse), this protein is Kelch-like protein 21 (Klhl21).